Here is a 222-residue protein sequence, read N- to C-terminus: Chymotrypsin-1 (222 aa).

A Peptidase S1 domain is found at 1–221; sequence IVGGKDAPVG…FVSWINANLK (221 aa). Cys26 and Cys42 are disulfide-bonded. Catalysis depends on charge relay system residues His41 and Asp87. 2 cysteine pairs are disulfide-bonded: Cys151-Cys164 and Cys174-Cys198. Ser178 (charge relay system) is an active-site residue.

This sequence belongs to the peptidase S1 family.

The protein localises to the secreted. Its subcellular location is the extracellular space. The catalysed reaction is Preferential cleavage: Tyr-|-Xaa, Trp-|-Xaa, Phe-|-Xaa, Leu-|-Xaa.. This chain is Chymotrypsin-1, found in Solenopsis invicta (Red imported fire ant).